The following is a 156-amino-acid chain: Cyanate hydratase (156 aa).

Catalysis depends on residues R96, E99, and S122.

Belongs to the cyanase family. As to quaternary structure, homodecamer composed of five homodimers.

It carries out the reaction cyanate + hydrogencarbonate + 3 H(+) = NH4(+) + 2 CO2. Functionally, catalyzes the reaction of cyanate with bicarbonate to produce ammonia and carbon dioxide. This is Cyanate hydratase (cynS) from Escherichia coli O157:H7.